Here is a 478-residue protein sequence, read N- to C-terminus: Probable serine carboxypeptidase CPVL (478 aa).

Residues 1–22 (MVRAQWKVIILLILLMVIPSDG) form the signal peptide. Asn-83 and Asn-134 each carry an N-linked (GlcNAc...) asparagine glycan. Ser-206 is a catalytic residue. Asn-309 and Asn-350 each carry an N-linked (GlcNAc...) asparagine glycan. Active-site residues include Asp-390 and His-450.

It belongs to the peptidase S10 family.

In terms of biological role, may be involved in the digestion of phagocytosed particles in the lysosome, participation in an inflammatory protease cascade, and trimming of peptides for antigen presentation. The protein is Probable serine carboxypeptidase CPVL (CPVL) of Rattus norvegicus (Rat).